A 305-amino-acid polypeptide reads, in one-letter code: Coiled-coil domain-containing protein 50 (305 aa).

Ala2 carries the N-acetylalanine modification. Position 5 is a phosphoserine (Ser5). A coiled-coil region spans residues 86 to 130 (EIAQEIQEKLTIEAERRRIQEKKDEDIARLLQEKELQEEKRRKKH). Disordered stretches follow at residues 122–142 (QEEKRRKKHTPEFSGGSVFGD) and 218–305 (KKAK…HNKQ). Basic and acidic residues-rich tracts occupy residues 218 to 239 (KKAKEREKSSLDKRKHDPECKL) and 247 to 263 (KSKEGDEAHRSKIDRPS). A compositionally biased stretch (polar residues) spans 279–305 (THFTNQHSTTWHLPKSESSQKGFHNKQ).

In terms of assembly, interacts with RNF126. Phosphorylated on tyrosine residues. Widely expressed.

The protein localises to the cytoplasm. Functionally, involved in EGFR signaling. The chain is Coiled-coil domain-containing protein 50 (Ccdc50) from Mus musculus (Mouse).